The sequence spans 555 residues: DNA-directed primase/polymerase protein (555 aa).

Residues 1 to 22 (MKRKWEATLKQIEERASHYERK) are a coiled coil. Residues Arg-76, 114–116 (DLE), and 165–169 (KFSRH) contribute to the substrate site. Residues Asp-114 and Glu-116 each contribute to the Mn(2+) site. The interval 210 to 230 (ETTGHEFTHFSETPSEQGTCF) is disordered. Residues 219–230 (FSETPSEQGTCF) show a composition bias toward polar residues. Phosphoserine is present on Ser-255. Residues 288–291 (RNFR) and Lys-297 contribute to the substrate site. Cys-418, His-425, Cys-445, and Cys-450 together coordinate Zn(2+). The Zinc knuckle motif motif lies at 418–451 (CENIGRAHRSNNIMILVDLKNEVWYQKCHDPVCK). The interval 480–503 (TDTTADTETKSPHGPSSSVLSKGA) is disordered. The interval 480–555 (TDTTADTETK…DELLIEVLQE (76 aa)) is interaction with RPA1. Short sequence motifs (RPA1-binding motif) lie at residues 509-523 (WDNG…EATE) and 543-551 (EIPDELLIE).

The protein belongs to the eukaryotic-type primase small subunit family. Interacts with RPA1; leading to recruitment to chromatin and stimulate DNA primase activity. Interacts with SSBP1. Interacts with POLDIP2; leading to enhance DNA polymerase activity. Mn(2+) is required as a cofactor.

It is found in the nucleus. The protein localises to the mitochondrion matrix. It localises to the chromosome. The catalysed reaction is ssDNA + n NTP = ssDNA/pppN(pN)n-1 hybrid + (n-1) diphosphate.. It catalyses the reaction DNA(n) + a 2'-deoxyribonucleoside 5'-triphosphate = DNA(n+1) + diphosphate. In terms of biological role, DNA primase and DNA polymerase required to tolerate replication-stalling lesions by bypassing them. Required to facilitate mitochondrial and nuclear replication fork progression by initiating de novo DNA synthesis using dNTPs and acting as an error-prone DNA polymerase able to bypass certain DNA lesions. Shows a high capacity to tolerate DNA damage lesions such as 8oxoG and abasic sites in DNA. Provides different translesion synthesis alternatives when DNA replication is stalled: able to synthesize DNA primers downstream of lesions, such as ultraviolet (UV) lesions, R-loops and G-quadruplexes, to allow DNA replication to continue. Can also realign primers ahead of 'unreadable lesions' such as abasic sites and 6-4 photoproduct (6-4 pyrimidine-pyrimidinone), thereby skipping the lesion. Repriming avoids fork degradation while leading to accumulation of internal ssDNA gaps behind the forks. Also able to incorporate nucleotides opposite DNA lesions such as 8oxoG, like a regular translesion synthesis DNA polymerase. Also required for reinitiating stalled forks after UV damage during nuclear DNA replication. Required for mitochondrial DNA (mtDNA) synthesis and replication, by reinitiating synthesis after UV damage or in the presence of chain-terminating nucleotides. Prevents APOBEC family-mediated DNA mutagenesis by repriming downstream of abasic site to prohibit error-prone translesion synthesis. Has non-overlapping function with POLH. In addition to its role in DNA damage response, also required to maintain efficient nuclear and mitochondrial DNA replication in unperturbed cells. The sequence is that of DNA-directed primase/polymerase protein from Bos taurus (Bovine).